The primary structure comprises 157 residues: NADPH-dependent 7-cyano-7-deazaguanine reductase (157 aa).

Cys-55 acts as the Thioimide intermediate in catalysis. Asp-62 (proton donor) is an active-site residue. Substrate is bound by residues 77-79 and 96-97; these read VES and HE.

The protein belongs to the GTP cyclohydrolase I family. QueF type 1 subfamily.

It is found in the cytoplasm. The enzyme catalyses 7-aminomethyl-7-carbaguanine + 2 NADP(+) = 7-cyano-7-deazaguanine + 2 NADPH + 3 H(+). It functions in the pathway tRNA modification; tRNA-queuosine biosynthesis. In terms of biological role, catalyzes the NADPH-dependent reduction of 7-cyano-7-deazaguanine (preQ0) to 7-aminomethyl-7-deazaguanine (preQ1). This Neisseria gonorrhoeae (strain ATCC 700825 / FA 1090) protein is NADPH-dependent 7-cyano-7-deazaguanine reductase.